Here is a 443-residue protein sequence, read N- to C-terminus: dTDP-4-dehydro-6-deoxy-alpha-D-glucopyranose 2,3-dehydratase (443 aa).

DTDP-4-dehydro-6-deoxy-alpha-D-glucose-binding positions include Trp-35, 118 to 122, Ser-157, Trp-260, Arg-325, 341 to 343, 346 to 347, and 377 to 380; these read TFSNY, QCN, NL, and EGGR.

It belongs to the hexose 2,3-dehydratase family. As to quaternary structure, homodimer.

It catalyses the reaction dTDP-4-dehydro-6-deoxy-alpha-D-glucose = dTDP-3,4-didehydro-2,6-dideoxy-alpha-D-glucose + H2O. It functions in the pathway antibiotic biosynthesis; granaticin biosynthesis. Functionally, involved in the biosynthesis of the 2,6-deoxysugar, dTDP-L-rhodinose, attached to the benzoisochromane quinone chromophore to produce the aglycone antibiotics granaticin and granaticin B. Catalyzes the removal of the hydroxyl group at position C-2 of the hexose ring of dTDP-4-dehydro-6-deoxy-alpha-D-glucopyranose, and the oxidation of the hydroxyl group at position C-3 to form a carbonyl functionality. The product of the reaction, dTDP-2,6-dideoxy-D-glycero-hex-2-enos-4-ulose, is a highly unstable diketosugar, which spontaneously forms dTDP-3,4-didehydro-2,6-dideoxy-alpha-D-glucose. The sequence is that of dTDP-4-dehydro-6-deoxy-alpha-D-glucopyranose 2,3-dehydratase from Streptomyces violaceoruber.